A 160-amino-acid polypeptide reads, in one-letter code: Nitrate reductase [NADH] (160 aa).

T37 lines the FAD pocket.

This sequence belongs to the nitrate reductase family. In terms of assembly, homodimer. Requires FAD as cofactor. Heme is required as a cofactor. Mo-molybdopterin serves as cofactor.

It catalyses the reaction nitrite + NAD(+) + H2O = nitrate + NADH + H(+). In terms of biological role, nitrate reductase is a key enzyme involved in the first step of nitrate assimilation in plants, fungi and bacteria. The chain is Nitrate reductase [NADH] (NIA) from Lotus tetragonolobus (Winged pea).